Consider the following 439-residue polypeptide: Enolase 1 (439 aa).

The substrate site is built by histidine 160 and glutamate 169. The active-site Proton donor is glutamate 212. Mg(2+) is bound by residues aspartate 247, glutamate 296, and aspartate 323. Positions 296 and 323 each coordinate substrate. The active-site Proton acceptor is the lysine 348. Residues 375-378 (SHRS) and lysine 399 each bind substrate.

The protein belongs to the enolase family. Homodimer. The cofactor is Mg(2+).

The protein localises to the cytoplasm. The enzyme catalyses (2R)-2-phosphoglycerate = phosphoenolpyruvate + H2O. The protein operates within carbohydrate degradation; glycolysis; pyruvate from D-glyceraldehyde 3-phosphate: step 4/5. In Debaryomyces hansenii (strain ATCC 36239 / CBS 767 / BCRC 21394 / JCM 1990 / NBRC 0083 / IGC 2968) (Yeast), this protein is Enolase 1 (ENO1).